Reading from the N-terminus, the 338-residue chain is D-erythrose-4-phosphate dehydrogenase (338 aa).

Arg11–Ile12 lines the NAD(+) pocket. Substrate-binding positions include Ser153–Thr155, Arg199, Thr212–Lys213, and Arg235. Cys154 functions as the Nucleophile in the catalytic mechanism. Position 317 (Asn317) interacts with NAD(+).

It belongs to the glyceraldehyde-3-phosphate dehydrogenase family. Epd subfamily. Homotetramer.

It is found in the cytoplasm. The catalysed reaction is D-erythrose 4-phosphate + NAD(+) + H2O = 4-phospho-D-erythronate + NADH + 2 H(+). Its pathway is cofactor biosynthesis; pyridoxine 5'-phosphate biosynthesis; pyridoxine 5'-phosphate from D-erythrose 4-phosphate: step 1/5. Functionally, catalyzes the NAD-dependent conversion of D-erythrose 4-phosphate to 4-phosphoerythronate. In Shewanella loihica (strain ATCC BAA-1088 / PV-4), this protein is D-erythrose-4-phosphate dehydrogenase.